The sequence spans 415 residues: Serine hydroxymethyltransferase (415 aa).

Residues L121 and 125 to 127 contribute to the (6S)-5,6,7,8-tetrahydrofolate site; that span reads GHL. K230 carries the post-translational modification N6-(pyridoxal phosphate)lysine. 355–357 is a binding site for (6S)-5,6,7,8-tetrahydrofolate; the sequence is SPF.

The protein belongs to the SHMT family. In terms of assembly, homodimer. Requires pyridoxal 5'-phosphate as cofactor.

It localises to the cytoplasm. The catalysed reaction is (6R)-5,10-methylene-5,6,7,8-tetrahydrofolate + glycine + H2O = (6S)-5,6,7,8-tetrahydrofolate + L-serine. The protein operates within one-carbon metabolism; tetrahydrofolate interconversion. It functions in the pathway amino-acid biosynthesis; glycine biosynthesis; glycine from L-serine: step 1/1. Functionally, catalyzes the reversible interconversion of serine and glycine with tetrahydrofolate (THF) serving as the one-carbon carrier. This reaction serves as the major source of one-carbon groups required for the biosynthesis of purines, thymidylate, methionine, and other important biomolecules. Also exhibits THF-independent aldolase activity toward beta-hydroxyamino acids, producing glycine and aldehydes, via a retro-aldol mechanism. This is Serine hydroxymethyltransferase from Lactococcus lactis subsp. lactis (strain IL1403) (Streptococcus lactis).